The sequence spans 207 residues: Ion-translocating oxidoreductase complex subunit B (207 aa).

The tract at residues 1 to 29 is hydrophobic; it reads MLDLSIIAYLLIAICLIALIFGALLGYFS. Residues 35–93 enclose the 4Fe-4S domain; the sequence is EADPIVDQIDAILPQSQCGQCGYPGCKPYAEAIANGDQITKCVPGGQPLVVKIAELMGV. Residues Cys-52, Cys-55, Cys-60, Cys-76, Cys-116, Cys-119, Cys-122, Cys-126, Cys-146, Cys-149, Cys-152, and Cys-156 each coordinate [4Fe-4S] cluster. 2 4Fe-4S ferredoxin-type domains span residues 107–136 and 137–166; these read KVAL…GTNK and AMHT…MIKV.

Belongs to the 4Fe4S bacterial-type ferredoxin family. RnfB subfamily. In terms of assembly, the complex is composed of six subunits: RnfA, RnfB, RnfC, RnfD, RnfE and RnfG. The cofactor is [4Fe-4S] cluster.

The protein localises to the cell inner membrane. In terms of biological role, part of a membrane-bound complex that couples electron transfer with translocation of ions across the membrane. This is Ion-translocating oxidoreductase complex subunit B from Haemophilus ducreyi (strain 35000HP / ATCC 700724).